A 443-amino-acid chain; its full sequence is Aspartic protease PEP3 (443 aa).

Positions 1 to 36 (MQNRPRVFDSAMNLSPNMHFLSLMPGLLLLSLQVHT) are cleaved as a signal peptide. Residues 37 to 107 (SPTPLKKTIR…NTVSKAMQAN (71 aa)) constitute a propeptide, activation peptide. A Peptidase A1 domain is found at 123–440 (YLSPVTIGGQ…DLRGPSLHVA (318 aa)). Asp139 is a catalytic residue. Asn180 and Asn293 each carry an N-linked (GlcNAc...) asparagine glycan. Asp327 is a catalytic residue. An intrachain disulfide couples Cys363 to Cys403. N-linked (GlcNAc...) asparagine glycosylation is found at Asn364 and Asn388.

It belongs to the peptidase A1 family. In terms of assembly, monomer.

The protein localises to the secreted. Functionally, secreted aspartic endopeptidase that allows assimilation of proteinaceous substrates. The scissile peptide bond is attacked by a nucleophilic water molecule activated by two aspartic residues in the active site. Shows a broad primary substrate specificity. Favors hydrophobic residues at the P1 and P1' positions. This chain is Aspartic protease PEP3, found in Coccidioides posadasii (strain C735) (Valley fever fungus).